A 225-amino-acid polypeptide reads, in one-letter code: Leucyl/phenylalanyl-tRNA--protein transferase (225 aa).

The protein belongs to the L/F-transferase family.

It localises to the cytoplasm. It carries out the reaction N-terminal L-lysyl-[protein] + L-leucyl-tRNA(Leu) = N-terminal L-leucyl-L-lysyl-[protein] + tRNA(Leu) + H(+). The catalysed reaction is N-terminal L-arginyl-[protein] + L-leucyl-tRNA(Leu) = N-terminal L-leucyl-L-arginyl-[protein] + tRNA(Leu) + H(+). The enzyme catalyses L-phenylalanyl-tRNA(Phe) + an N-terminal L-alpha-aminoacyl-[protein] = an N-terminal L-phenylalanyl-L-alpha-aminoacyl-[protein] + tRNA(Phe). Functions in the N-end rule pathway of protein degradation where it conjugates Leu, Phe and, less efficiently, Met from aminoacyl-tRNAs to the N-termini of proteins containing an N-terminal arginine or lysine. The protein is Leucyl/phenylalanyl-tRNA--protein transferase of Nitrobacter hamburgensis (strain DSM 10229 / NCIMB 13809 / X14).